Consider the following 87-residue polypeptide: U14-lycotoxin-Ls1a (87 aa).

The first 20 residues, 1–20 (MNSKVFAVLLLLALLTCVLS), serve as a signal peptide directing secretion. A WAP domain is found at 21 to 66 (EKYCPTPRNTSCKKMNIRNNCCRDSDCTSNAFCCAEPCGNFCHKAS). 5 cysteine pairs are disulfide-bonded: C24-C54, C32-C58, C41-C53, C42-C80, and C47-C62.

It belongs to the venom protein 11 family. 01 (wap-1) subfamily. In terms of processing, contains 5 disulfide bonds. Expressed by the venom gland.

It is found in the secreted. Functionally, has antibacterial activity. In Lycosa singoriensis (Wolf spider), this protein is U14-lycotoxin-Ls1a.